The chain runs to 128 residues: Large ribosomal subunit protein bL12 (128 aa).

The protein belongs to the bacterial ribosomal protein bL12 family. In terms of assembly, homodimer. Part of the ribosomal stalk of the 50S ribosomal subunit. Forms a multimeric L10(L12)X complex, where L10 forms an elongated spine to which 2 to 4 L12 dimers bind in a sequential fashion. Binds GTP-bound translation factors.

Its function is as follows. Forms part of the ribosomal stalk which helps the ribosome interact with GTP-bound translation factors. Is thus essential for accurate translation. The chain is Large ribosomal subunit protein bL12 from Rubrobacter xylanophilus (strain DSM 9941 / JCM 11954 / NBRC 16129 / PRD-1).